Consider the following 147-residue polypeptide: Deoxyuridine 5'-triphosphate nucleotidohydrolase (147 aa).

Substrate-binding positions include arginine 67 to glycine 69, asparagine 80, and threonine 84 to aspartate 86.

This sequence belongs to the dUTPase family. The cofactor is Mg(2+).

It catalyses the reaction dUTP + H2O = dUMP + diphosphate + H(+). Its pathway is pyrimidine metabolism; dUMP biosynthesis; dUMP from dCTP (dUTP route): step 2/2. Its function is as follows. This enzyme is involved in nucleotide metabolism: it produces dUMP, the immediate precursor of thymidine nucleotides and it decreases the intracellular concentration of dUTP so that uracil cannot be incorporated into DNA. The sequence is that of Deoxyuridine 5'-triphosphate nucleotidohydrolase from Anaeromyxobacter sp. (strain Fw109-5).